The chain runs to 90 residues: N(2)-fixation sustaining protein CowN (90 aa).

This sequence belongs to the CowN family.

Its function is as follows. Is required to sustain N(2)-dependent growth in the presence of low levels of carbon monoxide (CO). Probably acts by protecting the N(2) fixation ability of the nitrogenase complex, which is inactivated in the presence of CO. The sequence is that of N(2)-fixation sustaining protein CowN from Methylocella silvestris (strain DSM 15510 / CIP 108128 / LMG 27833 / NCIMB 13906 / BL2).